The primary structure comprises 343 residues: MKIAVDAMGGDNAPQVIIEGVEEARDLYPDLEFDLYGNPDKVKPLIKNNERLNIVATSEEISMGEEPVRAIRRKKDSSIVRAATAVKEGKADAFFSAGNTGAILAAGLFIVGRIKGIDRPGLTSILPIAKPGASRHNFVYLDTGANAESKEKNLEQYAYLGKFYAENVLGVANPRIALLNNGAEEDKGDKLHKEVWQILNSKDDLNFVGNIESGDLLFGKADVVVSDGWTANAALKATEGTAKMMMTLIKDGILHGGLRAKLGYLMLKPVFHQIGQKMSASTYGGAVLLGLKAPVVKTHGSADALAVKNTISQIRTMLKTGVIEKTVEFFDSTENLDNSQKNE.

This sequence belongs to the PlsX family. Homodimer. Probably interacts with PlsY.

The protein localises to the cytoplasm. The enzyme catalyses a fatty acyl-[ACP] + phosphate = an acyl phosphate + holo-[ACP]. Its pathway is lipid metabolism; phospholipid metabolism. Catalyzes the reversible formation of acyl-phosphate (acyl-PO(4)) from acyl-[acyl-carrier-protein] (acyl-ACP). This enzyme utilizes acyl-ACP as fatty acyl donor, but not acyl-CoA. The chain is Phosphate acyltransferase from Limosilactobacillus reuteri (strain DSM 20016) (Lactobacillus reuteri).